We begin with the raw amino-acid sequence, 144 residues long: Large ribosomal subunit protein uL15 (144 aa).

A disordered region spans residues Met1 to Gln54. Over residues Gly22–Ala31 the composition is skewed to gly residues.

Belongs to the universal ribosomal protein uL15 family. Part of the 50S ribosomal subunit.

Its function is as follows. Binds to the 23S rRNA. The sequence is that of Large ribosomal subunit protein uL15 from Hydrogenovibrio crunogenus (strain DSM 25203 / XCL-2) (Thiomicrospira crunogena).